The chain runs to 448 residues: Adenylosuccinate synthetase (448 aa).

Residues 36–42 (GDEGKGK) and 64–66 (GHT) contribute to the GTP site. Catalysis depends on aspartate 37, which acts as the Proton acceptor. Residues aspartate 37 and glycine 64 each contribute to the Mg(2+) site. IMP-binding positions include 37 to 40 (DEGK), 62 to 65 (NAGH), threonine 154, arginine 168, asparagine 246, threonine 261, and arginine 325. Histidine 65 (proton donor) is an active-site residue. 321–327 (VTTKRKR) provides a ligand contact to substrate. GTP is bound by residues arginine 327, 353–355 (KLD), and 436–438 (GVG).

The protein belongs to the adenylosuccinate synthetase family. As to quaternary structure, homodimer. The cofactor is Mg(2+).

It is found in the cytoplasm. The catalysed reaction is IMP + L-aspartate + GTP = N(6)-(1,2-dicarboxyethyl)-AMP + GDP + phosphate + 2 H(+). Its pathway is purine metabolism; AMP biosynthesis via de novo pathway; AMP from IMP: step 1/2. In terms of biological role, plays an important role in the de novo pathway and in the salvage pathway of purine nucleotide biosynthesis. Catalyzes the first committed step in the biosynthesis of AMP from IMP. This chain is Adenylosuccinate synthetase, found in Drosophila mojavensis (Fruit fly).